A 212-amino-acid polypeptide reads, in one-letter code: Uracil phosphoribosyltransferase (212 aa).

Residues Arg78, Arg103, and Asp130–Ser138 each bind 5-phospho-alpha-D-ribose 1-diphosphate. Uracil-binding positions include Ile193 and Gly198 to Ala200. Residue Asp199 participates in 5-phospho-alpha-D-ribose 1-diphosphate binding.

This sequence belongs to the UPRTase family. Mg(2+) serves as cofactor.

It catalyses the reaction UMP + diphosphate = 5-phospho-alpha-D-ribose 1-diphosphate + uracil. Its pathway is pyrimidine metabolism; UMP biosynthesis via salvage pathway; UMP from uracil: step 1/1. Its activity is regulated as follows. Allosterically activated by GTP. In terms of biological role, catalyzes the conversion of uracil and 5-phospho-alpha-D-ribose 1-diphosphate (PRPP) to UMP and diphosphate. This is Uracil phosphoribosyltransferase from Azotobacter vinelandii (strain DJ / ATCC BAA-1303).